Consider the following 206-residue polypeptide: Small ribosomal subunit protein uS4 (206 aa).

The S4 RNA-binding domain maps to 98-163 (MRLDNVVYRL…SEKFKTFVEN (66 aa)).

This sequence belongs to the universal ribosomal protein uS4 family. In terms of assembly, part of the 30S ribosomal subunit. Contacts protein S5. The interaction surface between S4 and S5 is involved in control of translational fidelity.

In terms of biological role, one of the primary rRNA binding proteins, it binds directly to 16S rRNA where it nucleates assembly of the body of the 30S subunit. Functionally, with S5 and S12 plays an important role in translational accuracy. The polypeptide is Small ribosomal subunit protein uS4 (Clostridium botulinum (strain Alaska E43 / Type E3)).